We begin with the raw amino-acid sequence, 351 residues long: Cell shape-determining protein MreB (351 aa).

Residues Thr-20–Asn-22, Gly-169–Thr-171, Glu-217–Lys-220, and Gly-299–Leu-302 contribute to the ATP site.

Belongs to the FtsA/MreB family. Forms polymers.

It is found in the cytoplasm. Forms membrane-associated dynamic filaments that are essential for cell shape determination. Acts by regulating cell wall synthesis and cell elongation, and thus cell shape. A feedback loop between cell geometry and MreB localization may maintain elongated cell shape by targeting cell wall growth to regions of negative cell wall curvature. The chain is Cell shape-determining protein MreB from Pasteurella multocida (strain Pm70).